The primary structure comprises 330 residues: Aspartate--ammonia ligase (330 aa).

This sequence belongs to the class-II aminoacyl-tRNA synthetase family. AsnA subfamily.

The protein localises to the cytoplasm. It catalyses the reaction L-aspartate + NH4(+) + ATP = L-asparagine + AMP + diphosphate + H(+). It participates in amino-acid biosynthesis; L-asparagine biosynthesis; L-asparagine from L-aspartate (ammonia route): step 1/1. The polypeptide is Aspartate--ammonia ligase (Escherichia coli O8 (strain IAI1)).